The primary structure comprises 546 residues: Probable protein kinase UbiB (546 aa).

One can recognise a Protein kinase domain in the interval 124-502 (DFEIKPLASA…HVRQGQSRYF (379 aa)). ATP is bound by residues 130–138 (LASASIAQV) and Lys-153. The active-site Proton acceptor is the Asp-288. The next 2 helical transmembrane spans lie at 501–521 (YFLGIGATLVLSGTFLLVSRP) and 522–542 (EWGLMPGWLMAGGLIAWFVGW).

This sequence belongs to the ABC1 family. UbiB subfamily.

Its subcellular location is the cell inner membrane. It participates in cofactor biosynthesis; ubiquinone biosynthesis [regulation]. Its function is as follows. Is probably a protein kinase regulator of UbiI activity which is involved in aerobic coenzyme Q (ubiquinone) biosynthesis. This Shigella boydii serotype 18 (strain CDC 3083-94 / BS512) protein is Probable protein kinase UbiB.